Consider the following 61-residue polypeptide: Protein translocase subunit SecE (61 aa).

The chain crosses the membrane as a helical span at residues 39 to 59 (LGILVIGLVGMLIRIIGILML).

It belongs to the SecE/SEC61-gamma family. Component of the Sec protein translocase complex. Heterotrimer consisting of SecY (alpha), SecG (beta) and SecE (gamma) subunits. The heterotrimers can form oligomers, although 1 heterotrimer is thought to be able to translocate proteins. Interacts with the ribosome. May interact with SecDF, and other proteins may be involved.

It is found in the cell membrane. Functionally, essential subunit of the Sec protein translocation channel SecYEG. Clamps together the 2 halves of SecY. May contact the channel plug during translocation. The chain is Protein translocase subunit SecE from Pyrococcus horikoshii (strain ATCC 700860 / DSM 12428 / JCM 9974 / NBRC 100139 / OT-3).